The sequence spans 534 residues: Arginine--tRNA ligase (534 aa).

A 'HIGH' region motif is present at residues 120-130 (ANPTGFLHLGH).

The protein belongs to the class-I aminoacyl-tRNA synthetase family. Monomer.

It localises to the cytoplasm. The enzyme catalyses tRNA(Arg) + L-arginine + ATP = L-arginyl-tRNA(Arg) + AMP + diphosphate. In Mesomycoplasma hyopneumoniae (strain 232) (Mycoplasma hyopneumoniae), this protein is Arginine--tRNA ligase.